The following is a 448-amino-acid chain: Probable D-serine dehydratase (448 aa).

N6-(pyridoxal phosphate)lysine is present on Lys-117.

Belongs to the serine/threonine dehydratase family. DsdA subfamily. Pyridoxal 5'-phosphate serves as cofactor.

The enzyme catalyses D-serine = pyruvate + NH4(+). This chain is Probable D-serine dehydratase (dsdA), found in Bacillus subtilis (strain 168).